Reading from the N-terminus, the 239-residue chain is Ribosomal RNA small subunit methyltransferase G (239 aa).

S-adenosyl-L-methionine is bound by residues Gly78, Phe83, Ala129 to Glu130, and Arg148.

The protein belongs to the methyltransferase superfamily. RNA methyltransferase RsmG family.

It localises to the cytoplasm. Functionally, specifically methylates the N7 position of a guanine in 16S rRNA. This Clostridium perfringens (strain SM101 / Type A) protein is Ribosomal RNA small subunit methyltransferase G.